Reading from the N-terminus, the 583-residue chain is Transmembrane protein 108 (583 aa).

The chain crosses the membrane as a helical span at residues 7–27; sequence ALYCQLLSFLLTLALTEALVF. Positions 31 to 176 are interacts with SH3GL2; the sequence is EPSPRESLQV…ATIRRPPRPP (146 aa). Disordered regions lie at residues 71-360 and 376-404; these read VTPT…GVFA and VPSEGLPQGTSLAPQAPAHPTWASESTVS. Composition is skewed to polar residues over residues 80-93 and 100-122; these read PSSQATAPMATTTP and PTNTISTIMATASTPHSEGSLST. Over residues 177 to 187 the composition is skewed to low complexity; that stretch reads GSSRKGAGSSP. The segment at 180 to 413 is interacts with DST (isoform 1); sequence RKGAGSSPRP…SQAEEKAVAT (234 aa). Polar residues-rich tracts occupy residues 251–273, 310–319, and 333–357; these read YSSSPQPQTVAATSAPSRTSWVP, ASGTPASQQR, and DGSSHSDSWLTVTPGTSRPPSTNSG. A helical transmembrane segment spans residues 477–497; the sequence is IAWVILAISVPISSCSVLLTV. The interval 498–583 is interaction with CYFIP2; sequence CCLRRKKKPA…FVGNDQVSEI (86 aa).

In terms of assembly, interacts with DST (isoform 1). Interacts with SH3GL2. Interacts (via N-terminus) with CYFIP1 and CYFIP2; the interactions associate TMEM108 with the WAVE1 complex. In terms of processing, glycosylated.

Its subcellular location is the membrane. It is found in the postsynaptic density. The protein resides in the endosome membrane. It localises to the cell projection. The protein localises to the axon. Its subcellular location is the dendrite. It is found in the early endosome. In terms of biological role, transmembrane protein required for proper cognitive functions. Involved in the development of dentate gyrus (DG) neuron circuitry, is necessary for AMPA receptors surface expression and proper excitatory postsynaptic currents of DG granule neurons. Regulates the organization and stability of the microtubule network of sensory neurons to allow axonal transport. Through the interaction with DST, mediates the docking of the dynein/dynactin motor complex to vesicle cargos for retrograde axonal transport. In hippocampal neurons, required for BDNF-dependent dendrite outgrowth. Cooperates with SH3GL2 and recruits the WAVE1 complex to facilitate actin-dependent BDNF:NTRK2 early endocytic trafficking and mediate signaling from early endosomes. The polypeptide is Transmembrane protein 108 (Bos taurus (Bovine)).